Here is a 402-residue protein sequence, read N- to C-terminus: Plasminogen activator inhibitor 1 (402 aa).

Residues Met-1–Phe-22 form the signal peptide. N-linked (GlcNAc...) asparagine glycosylation is found at Asn-232, Asn-288, and Asn-352.

Belongs to the serpin family. As to quaternary structure, forms a heterodimer with TMPRSS7. Interacts with VTN. Binds LRP1B; binding is followed by internalization and degradation. Interacts with PPP1CB. In complex with PLAU/uPA, interacts with PLAUR/uPAR. Interacts with SORL1 and LRP1, either alone or in complex with PLAU; these interactions are abolished in the presence of LRPAP1/RAP. The ternary complex composed of PLAUR-PLAU-PAI1 also interacts with SORL1. Interacts with PLAT/tPA. Also interacts with SORL1, when complexed to PLAT/tPA.

It is found in the secreted. Its function is as follows. Serine protease inhibitor. Inhibits TMPRSS7. Is a primary inhibitor of tissue-type plasminogen activator (PLAT) and urokinase-type plasminogen activator (PLAU). As PLAT inhibitor, it is required for fibrinolysis down-regulation and is responsible for the controlled degradation of blood clots. As PLAU inhibitor, it is involved in the regulation of cell adhesion and spreading. Acts as a regulator of cell migration, independently of its role as protease inhibitor. It is required for stimulation of keratinocyte migration during cutaneous injury repair. Involved in cellular and replicative senescence. Plays a role in alveolar type 2 cells senescence in the lung. Is involved in the regulation of cementogenic differentiation of periodontal ligament stem cells, and regulates odontoblast differentiation and dentin formation during odontogenesis. This is Plasminogen activator inhibitor 1 (Serpine1) from Mus musculus (Mouse).